The sequence spans 439 residues: Dolichyl-diphosphooligosaccharide--protein glycosyltransferase 48 kDa subunit (439 aa).

The first 26 residues, 1 to 26 (MATRAARVWSGWWLLLLPLLGLAGAS), serve as a signal peptide directing secretion. At 27–409 (GPRTLVLLDN…QYERFIPSAY (383 aa)) the chain is on the lumenal side. The helical transmembrane segment at 410–430 (PYYASAFSMMLGLFIFSVVFL) threads the bilayer. The Cytoplasmic portion of the chain corresponds to 431–439 (HMKEKEKSD).

It belongs to the DDOST 48 kDa subunit family. As to quaternary structure, component of the oligosaccharyltransferase (OST) complex. OST exists in two different complex forms which contain common core subunits RPN1, RPN2, OST48, OST4, DAD1 and TMEM258, either STT3A or STT3B as catalytic subunits, and form-specific accessory subunits. STT3A complex assembly occurs through the formation of 3 subcomplexes. Subcomplex 1 contains RPN1 and TMEM258, subcomplex 2 contains the STT3A-specific subunits STT3A, DC2/OSTC, and KCP2 as well as the core subunit OST4, and subcomplex 3 contains RPN2, DAD1, and OST48. The STT3A complex can form stable complexes with the Sec61 complex or with both the Sec61 and TRAP complexes. Interacts with SMIM22.

The protein resides in the endoplasmic reticulum membrane. It participates in protein modification; protein glycosylation. Functionally, subunit of the oligosaccharyl transferase (OST) complex that catalyzes the initial transfer of a defined glycan (Glc(3)Man(9)GlcNAc(2) in eukaryotes) from the lipid carrier dolichol-pyrophosphate to an asparagine residue within an Asn-X-Ser/Thr consensus motif in nascent polypeptide chains, the first step in protein N-glycosylation. N-glycosylation occurs cotranslationally and the complex associates with the Sec61 complex at the channel-forming translocon complex that mediates protein translocation across the endoplasmic reticulum (ER). All subunits are required for a maximal enzyme activity. Required for the assembly of both SST3A- and SS3B-containing OST complexes. The protein is Dolichyl-diphosphooligosaccharide--protein glycosyltransferase 48 kDa subunit of Bos taurus (Bovine).